We begin with the raw amino-acid sequence, 621 residues long: 1-deoxy-D-xylulose-5-phosphate synthase (621 aa).

Thiamine diphosphate contacts are provided by residues His80 and 121–123 (GHS). Asp152 is a binding site for Mg(2+). Residues 153–154 (GA), Asn181, Tyr288, and Glu370 each bind thiamine diphosphate. Residue Asn181 participates in Mg(2+) binding.

The protein belongs to the transketolase family. DXPS subfamily. Homodimer. Requires Mg(2+) as cofactor. Thiamine diphosphate serves as cofactor.

It carries out the reaction D-glyceraldehyde 3-phosphate + pyruvate + H(+) = 1-deoxy-D-xylulose 5-phosphate + CO2. Its pathway is metabolic intermediate biosynthesis; 1-deoxy-D-xylulose 5-phosphate biosynthesis; 1-deoxy-D-xylulose 5-phosphate from D-glyceraldehyde 3-phosphate and pyruvate: step 1/1. In terms of biological role, catalyzes the acyloin condensation reaction between C atoms 2 and 3 of pyruvate and glyceraldehyde 3-phosphate to yield 1-deoxy-D-xylulose-5-phosphate (DXP). The chain is 1-deoxy-D-xylulose-5-phosphate synthase from Serratia proteamaculans (strain 568).